A 179-amino-acid chain; its full sequence is Bacterioferritin (179 aa).

Residues 1–150 (MAGNREDRKA…NIGSHIKNLG (150 aa)) form the Ferritin-like diiron domain. Fe cation contacts are provided by E23 and E56. M57 contributes to the Fe-coproporphyrin III binding site. 4 residues coordinate Fe cation: H59, E99, E132, and H135.

The protein belongs to the bacterioferritin family. In terms of assembly, homooligomer of 24 subunits, arranged as 12 dimers, that are packed together to form an approximately spherical molecule with a central cavity, in which large amounts of iron can be deposited. Fe-coproporphyrin III is required as a cofactor. Fe cation serves as cofactor.

It catalyses the reaction 4 Fe(2+) + O2 + 4 H(+) = 4 Fe(3+) + 2 H2O. The enzyme catalyses Fe(2+)(in) = Fe(2+)(out). Its function is as follows. Iron-storage protein, whose ferroxidase center binds Fe(2+), oxidizes it using dioxygen to Fe(3+), and participates in the subsequent Fe(3+) oxide mineral core formation within the central cavity of the BFR protein shell. The protein is Bacterioferritin (bfr) of Desulfovibrio desulfuricans (strain ATCC 27774 / DSM 6949 / MB).